The following is a 320-amino-acid chain: Ferrochelatase (320 aa).

Fe cation contacts are provided by His194 and Glu275.

Belongs to the ferrochelatase family. In terms of assembly, monomer.

It localises to the cytoplasm. The catalysed reaction is heme b + 2 H(+) = protoporphyrin IX + Fe(2+). Its pathway is porphyrin-containing compound metabolism; protoheme biosynthesis; protoheme from protoporphyrin-IX: step 1/1. In terms of biological role, catalyzes the ferrous insertion into protoporphyrin IX. The polypeptide is Ferrochelatase (Shigella dysenteriae serotype 1 (strain Sd197)).